The following is a 793-amino-acid chain: Probable phosphoketolase (793 aa).

This sequence belongs to the XFP family. It depends on thiamine diphosphate as a cofactor.

The chain is Probable phosphoketolase from Rhodopirellula baltica (strain DSM 10527 / NCIMB 13988 / SH1).